The following is a 506-amino-acid chain: Maturase K (506 aa).

The protein belongs to the intron maturase 2 family. MatK subfamily.

It is found in the plastid. The protein resides in the chloroplast. In terms of biological role, usually encoded in the trnK tRNA gene intron. Probably assists in splicing its own and other chloroplast group II introns. In Rhododendron hippophaeoides (Rhododendron), this protein is Maturase K.